We begin with the raw amino-acid sequence, 625 residues long: Vitamin B12 transporter BtuB (625 aa).

Positions 1–21 are cleaved as a signal peptide; the sequence is MTIKKYTLLTALSVTAFSGWA. Residues 31–38 carry the TonB box motif; the sequence is DEMVVTAN. The TBDR plug domain occupies 43 to 157; it reads PKSSVLAPVD…IGGVINILTG (115 aa). Residues Ser90, Asn97, and 115–116 each bind cyanocob(III)alamin; that span reads IT. The 466-residue stretch at 160–625 folds into the TBDR beta-barrel domain; sequence KPGTTLSAGL…EYYFTGSYNF (466 aa). Beta stranded transmembrane passes span 163-170, 174-183, and 189-200; these read TTLSAGLG, YQTYDGSTQQ, and TTVTLAGNYTYS. The Ca(2+) site is built by Asp204, Gln217, Asp219, and Asp221. Beta stranded transmembrane passes span 223-233 and 238-254; these read FMGKMLWAGLE and EQFNGFARVYGFDNRSD. Positions 255, 256, and 269 each coordinate Ca(2+). 14 consecutive transmembrane segments (beta stranded) span residues 271–285, 287–304, 317–333, 336–345, 363–379, 381–391, 395–410, 413–427, 445–454, 460–469, 484–501, 505–520, 528–540, and 546–561; these read RKLSSRTYDTGLRYK, GIYASQFIASYNRTKDYN, SLDEAEQYNLQWGNTFQ, NGMISAGADW, FTQHNTGIYLTGQQQIS, VTLEGAVRSDD, FGWHSTWQTSAGWEFI, YRLIGSYGTAYKAPN, ESKQWEGGVE, LTWRLSAYRN, YFNINKATIKGVEWTGSF, PLSHQVTLEYLDPRNA, RRAKQQVKYQLDW, and DWSVTYQYLGQRYDKD. Ser317 lines the cyanocob(III)alamin pocket. Position 528 (Arg528) interacts with cyanocob(III)alamin. Residue Tyr562 participates in cyanocob(III)alamin binding. 3 consecutive transmembrane segments (beta stranded) span residues 569–583, 596–607, and 613–625; these read TVELGGVSLWDLAVS, IANLFDKDYEMV, and PGREYYFTGSYNF. A TonB C-terminal box motif is present at residues 608–625; sequence YGYQTPGREYYFTGSYNF.

The protein belongs to the TonB-dependent receptor family. BtuB (TC 1.B.14.3.1) subfamily.

Its subcellular location is the cell outer membrane. Functionally, involved in the active translocation of vitamin B12 (cyanocobalamin) across the outer membrane to the periplasmic space. It derives its energy for transport by interacting with the trans-periplasmic membrane protein TonB. This is Vitamin B12 transporter BtuB from Yersinia pestis bv. Antiqua (strain Antiqua).